The chain runs to 364 residues: Oxidized low-density lipoprotein receptor 1 (364 aa).

The segment at 1–21 (MAFDDKMKPVNGQPDQKSCGK) is disordered. The Cytoplasmic segment spans residues 1–31 (MAFDDKMKPVNGQPDQKSCGKKPKGLHLLSS). The chain crosses the membrane as a helical; Signal-anchor for type II membrane protein span at residues 32–54 (TWWCPAAVTLAILCLVLSVTLIV). Residues Cys-35 and Cys-45 are each lipidated (S-palmitoyl cysteine). Residues 55 to 242 (QQTQLLQVSD…GPCPQDWIWH (188 aa)) are neck. Over 55–364 (QQTQLLQVSD…QKKANLLLTQ (310 aa)) the chain is Extracellular. Residues Asn-72, Asn-92, and Asn-138 are each glycosylated (N-linked (GlcNAc...) asparagine). Residues 83-233 (QMSAQKKAEN…ALQRAANSSG (151 aa)) are a coiled coil. Tandem repeats lie at residues 96–141 (ESKR…NASE), 142–187 (ESKW…KYSE), and 188–233 (ESQR…NSSG). 3 disulfide bridges follow: Cys-235-Cys-246, Cys-262-Cys-354, and Cys-333-Cys-346. One can recognise a C-type lectin domain in the interval 242-355 (HKENCYLFHG…CILTAFSICQ (114 aa)).

As to quaternary structure, homodimer; disulfide-linked. May form a hexamer composed of 3 homodimers. Interacts with HSP70. N-glycosylated. As to expression, predominantly expressed in lung and at lower level in kidney. Expressed in macrophages but not in vascular smooth muscle cells.

The protein localises to the cell membrane. Its subcellular location is the membrane raft. The protein resides in the secreted. Functionally, receptor that mediates the recognition, internalization and degradation of oxidatively modified low density lipoprotein (oxLDL) by vascular endothelial cells. OxLDL is a marker of atherosclerosis that induces vascular endothelial cell activation and dysfunction, resulting in pro-inflammatory responses, pro-oxidative conditions and apoptosis. Its association with oxLDL induces the activation of NF-kappa-B through an increased production of intracellular reactive oxygen and a variety of pro-atherogenic cellular responses including a reduction of nitric oxide (NO) release, monocyte adhesion and apoptosis. In addition to binding oxLDL, it acts as a receptor for the HSP70 protein involved in antigen cross-presentation to naive T-cells in dendritic cells, thereby participating in cell-mediated antigen cross-presentation. Also involved in inflammatory process, by acting as a leukocyte-adhesion molecule at the vascular interface in endotoxin-induced inflammation. Also acts as a receptor for advanced glycation end (AGE) products, activated platelets, monocytes, apoptotic cells and both Gram-negative and Gram-positive bacteria. The sequence is that of Oxidized low-density lipoprotein receptor 1 (Olr1) from Rattus norvegicus (Rat).